Reading from the N-terminus, the 173-residue chain is RNA pyrophosphohydrolase (173 aa).

The 144-residue stretch at Gly6–Arg149 folds into the Nudix hydrolase domain. The Nudix box signature appears at Gly38–Gly59.

This sequence belongs to the Nudix hydrolase family. RppH subfamily. It depends on a divalent metal cation as a cofactor.

In terms of biological role, accelerates the degradation of transcripts by removing pyrophosphate from the 5'-end of triphosphorylated RNA, leading to a more labile monophosphorylated state that can stimulate subsequent ribonuclease cleavage. In Thioalkalivibrio sulfidiphilus (strain HL-EbGR7), this protein is RNA pyrophosphohydrolase.